Here is a 73-residue protein sequence, read N- to C-terminus: UPF0270 protein SG2298 (73 aa).

Belongs to the UPF0270 family.

The chain is UPF0270 protein SG2298 from Sodalis glossinidius (strain morsitans).